Here is a 95-residue protein sequence, read N- to C-terminus: Signal recognition particle 19 kDa protein (95 aa).

Belongs to the SRP19 family. Part of the signal recognition particle protein translocation system, which is composed of SRP and FtsY. Archaeal SRP consists of a 7S RNA molecule of 300 nucleotides and two protein subunits: SRP54 and SRP19.

Its subcellular location is the cytoplasm. Its function is as follows. Involved in targeting and insertion of nascent membrane proteins into the cytoplasmic membrane. Binds directly to 7S RNA and mediates binding of the 54 kDa subunit of the SRP. This chain is Signal recognition particle 19 kDa protein, found in Methanococcoides burtonii (strain DSM 6242 / NBRC 107633 / OCM 468 / ACE-M).